The following is a 357-amino-acid chain: Arginine kinase (357 aa).

A Phosphagen kinase N-terminal domain is found at 9–91 (KLEAGFKKLQ…FDPIIDDYHG (83 aa)). Residue 64 to 68 (GVGIY) participates in substrate binding. Residues 119-356 (FIISTRVRCG…LEMIKMEKAA (238 aa)) enclose the Phosphagen kinase C-terminal domain. ATP contacts are provided by residues 122-126 (STRVR) and H185. A substrate-binding site is contributed by E225. An ATP-binding site is contributed by R229. C271 contributes to the substrate binding site. Residues 280 to 284 (RASVH) and 309 to 314 (RGTRGE) contribute to the ATP site. Position 314 (E314) interacts with substrate.

This sequence belongs to the ATP:guanido phosphotransferase family. In terms of assembly, monomer.

The protein localises to the cytoplasm. It carries out the reaction L-arginine + ATP = N(omega)-phospho-L-arginine + ADP + H(+). Catalyzes the reversible transfer of the terminal phosphoryl group of ATP to L-arginine. The sequence is that of Arginine kinase from Limulus polyphemus (Atlantic horseshoe crab).